The sequence spans 366 residues: Carbamoyl phosphate synthase small chain (366 aa).

A CPSase region spans residues 1–174 (MQEIPAILVL…GERYTVDNPD (174 aa)). L-glutamine contacts are provided by S48, G226, and G228. Residues 178–366 (HVVAFDYGIK…FTELMERLKN (189 aa)) form the Glutamine amidotransferase type-1 domain. C256 (nucleophile) is an active-site residue. L-glutamine-binding residues include L257, Q260, N298, G300, and F301. Active-site residues include H340 and E342.

This sequence belongs to the CarA family. In terms of assembly, composed of two chains; the small (or glutamine) chain promotes the hydrolysis of glutamine to ammonia, which is used by the large (or ammonia) chain to synthesize carbamoyl phosphate. Tetramer of heterodimers (alpha,beta)4.

The catalysed reaction is hydrogencarbonate + L-glutamine + 2 ATP + H2O = carbamoyl phosphate + L-glutamate + 2 ADP + phosphate + 2 H(+). The enzyme catalyses L-glutamine + H2O = L-glutamate + NH4(+). Its pathway is amino-acid biosynthesis; L-arginine biosynthesis; carbamoyl phosphate from bicarbonate: step 1/1. It participates in pyrimidine metabolism; UMP biosynthesis via de novo pathway; (S)-dihydroorotate from bicarbonate: step 1/3. Small subunit of the glutamine-dependent carbamoyl phosphate synthetase (CPSase). CPSase catalyzes the formation of carbamoyl phosphate from the ammonia moiety of glutamine, carbonate, and phosphate donated by ATP, constituting the first step of 2 biosynthetic pathways, one leading to arginine and/or urea and the other to pyrimidine nucleotides. The small subunit (glutamine amidotransferase) binds and cleaves glutamine to supply the large subunit with the substrate ammonia. The chain is Carbamoyl phosphate synthase small chain from Chlorobaculum tepidum (strain ATCC 49652 / DSM 12025 / NBRC 103806 / TLS) (Chlorobium tepidum).